The chain runs to 187 residues: Protein ECM23 (187 aa).

Disordered regions lie at residues 106–127 (GKKS…LPNG) and 167–187 (KKIR…FKNK). The GATA-type zinc-finger motif lies at 126 to 180 (NGQPKECATCGDTWTSQWRSGPNGNVELCSRCGIAYRKKMEKKIRSQQSSDDGTK).

Involved in morphogenesis. May be involved in cell wall organization and biogenesis. This Saccharomyces cerevisiae (strain ATCC 204508 / S288c) (Baker's yeast) protein is Protein ECM23 (ECM23).